We begin with the raw amino-acid sequence, 110 residues long: MADKPKRPLSAYMLWLNSARESIKRENPDFKVTEVAKKGGELWRGLKDKSEWEAKAATAKQNYIRALQEYERNGGGGDDKGKKRKGAAPKKGAGKKSKKGAHSDDDGDSE.

The segment at residues 5–71 (PKRPLSAYML…NYIRALQEYE (67 aa)) is a DNA-binding region (HMG box). Positions 71–81 (ERNGGGGDDKG) are enriched in basic and acidic residues. A disordered region spans residues 71 to 110 (ERNGGGGDDKGKKRKGAAPKKGAGKKSKKGAHSDDDGDSE). Positions 82–100 (KKRKGAAPKKGAGKKSKKG) are enriched in basic residues.

This sequence belongs to the HMGB family.

It is found in the nucleus. Its subcellular location is the chromosome. Found in condensed chromomeres. Binds preferentially to AT-rich DNA. The protein is Mobility group protein 1B (HMG1B) of Chironomus tentans (Midge).